Consider the following 1125-residue polypeptide: Angiopoietin-1 receptor (1125 aa).

The N-terminal stretch at 1–22 (MDSLAGLVLCGVSLLLSATVDG) is a signal peptide. The Extracellular segment spans residues 23–748 (AMDLILINSL…PADLGGRKML (726 aa)). Cys-44 and Cys-102 are oxidised to a cystine. One can recognise an Ig-like C2-type 1 domain in the interval 44 to 123 (CIASGWRPHE…RTMKMRQQAS (80 aa)). An N-linked (GlcNAc...) asparagine glycan is attached at Asn-158. 3 EGF-like domains span residues 210 to 252 (RCEA…RTCE), 254 to 299 (ACEP…LQCN), and 301 to 341 (ACQP…LQCE). Intrachain disulfides connect Cys-211–Cys-220, Cys-224–Cys-233, Cys-227–Cys-240, Cys-242–Cys-251, Cys-255–Cys-264, Cys-268–Cys-274, Cys-280–Cys-287, Cys-289–Cys-298, Cys-302–Cys-311, Cys-315–Cys-323, Cys-317–Cys-329, Cys-331–Cys-340, and Cys-370–Cys-424. Residues 350–440 (PKIEDLPDHI…GMVEKPFNIS (91 aa)) enclose the Ig-like C2-type 2 domain. Fibronectin type-III domains lie at 447-541 (PLNA…TASI), 545-637 (PPRG…TLSD), and 642-735 (QPEN…TLSE). The helical transmembrane segment at 749–769 (LIAILGSAGMTCLTVLLAFLI) threads the bilayer. Over 770-1125 (MLQLKRANVQ…GIDCSAEEAA (356 aa)) the chain is Cytoplasmic. The 273-residue stretch at 825–1097 (IKFQDVIGEG…QILVSLNRML (273 aa)) folds into the Protein kinase domain. ATP contacts are provided by residues 831–839 (IGEGNFGQV) and Lys-856. Phosphotyrosine; by autocatalysis is present on Tyr-861. The Proton acceptor role is filled by Asp-965. Phosphotyrosine; by autocatalysis is present on residues Tyr-993, Tyr-1103, and Tyr-1109.

This sequence belongs to the protein kinase superfamily. Tyr protein kinase family. Tie subfamily. Homodimer. Heterodimer with TIE1. Interacts with ANGPT1, ANGPT2 and ANGPT4. At cell-cell contacts in quiescent cells, forms a signaling complex composed of ANGPT1 plus TEK molecules from two adjoining cells. In the absence of endothelial cell-cell contacts, interaction with ANGPT1 mediates contacts with the extracellular matrix. Interacts (tyrosine phosphorylated) with TNIP2. Interacts (tyrosine phosphorylated) with SHC1 (via SH2 domain). Interacts with PTPRB; this promotes endothelial cell-cell adhesion. Interacts with DOK2, GRB2, GRB7, GRB14, PIK3R1 and PTPN11/SHP2. Colocalizes with DOK2 at contacts with the extracellular matrix in migrating cells. Proteolytic processing leads to the shedding of the extracellular domain (soluble TIE-2 alias sTIE-2). In terms of processing, autophosphorylated on tyrosine residues in response to ligand binding. Autophosphorylation occurs in trans, i.e. one subunit of the dimeric receptor phosphorylates tyrosine residues on the other subunit. Autophosphorylation occurs in a sequential manner, where Tyr-993 in the kinase activation loop is phosphorylated first, followed by autophosphorylation at Tyr-1109 and at additional tyrosine residues. ANGPT1-induced phosphorylation is impaired during hypoxia, due to increased expression of ANGPT2. Phosphorylation is important for interaction with GRB14, PIK3R1 and PTPN11. Phosphorylation at Tyr-1103 is important for interaction with GRB2 and GRB7. Phosphorylation at Tyr-1109 is important for interaction with DOK2 and for coupling to downstream signal transduction pathways in endothelial cells. Dephosphorylated by PTPRB. Post-translationally, ubiquitinated. The phosphorylated receptor is ubiquitinated and internalized, leading to its degradation. Specifically expressed in developing vascular endothelial cells.

The protein resides in the cell membrane. The protein localises to the cell junction. It localises to the focal adhesion. It is found in the cytoplasm. Its subcellular location is the cytoskeleton. The protein resides in the secreted. It carries out the reaction L-tyrosyl-[protein] + ATP = O-phospho-L-tyrosyl-[protein] + ADP + H(+). Its activity is regulated as follows. Angiopoietin binding leads to receptor dimerization and activation by autophosphorylation at Tyr-993 on the kinase activation loop. In terms of biological role, tyrosine-protein kinase that acts as a cell-surface receptor for ANGPT1, ANGPT2 and ANGPT4 and regulates angiogenesis, endothelial cell survival, proliferation, migration, adhesion and cell spreading, reorganization of the actin cytoskeleton, but also maintenance of vascular quiescence. Has anti-inflammatory effects by preventing the leakage of pro-inflammatory plasma proteins and leukocytes from blood vessels. Required for normal angiogenesis and heart development during embryogenesis. Required for post-natal hematopoiesis. After birth, activates or inhibits angiogenesis, depending on the context. Inhibits angiogenesis and promotes vascular stability in quiescent vessels, where endothelial cells have tight contacts. In quiescent vessels, ANGPT1 oligomers recruit TEK to cell-cell contacts, forming complexes with TEK molecules from adjoining cells, and this leads to preferential activation of phosphatidylinositol 3-kinase and the AKT1 signaling cascades. In migrating endothelial cells that lack cell-cell adhesions, ANGT1 recruits TEK to contacts with the extracellular matrix, leading to the formation of focal adhesion complexes, activation of PTK2/FAK and of the downstream kinases MAPK1/ERK2 and MAPK3/ERK1, and ultimately to the stimulation of sprouting angiogenesis. ANGPT1 signaling triggers receptor dimerization and autophosphorylation at specific tyrosine residues that then serve as binding sites for scaffold proteins and effectors. Signaling is modulated by ANGPT2 that has lower affinity for TEK, can promote TEK autophosphorylation in the absence of ANGPT1, but inhibits ANGPT1-mediated signaling by competing for the same binding site. Signaling is also modulated by formation of heterodimers with TIE1, and by proteolytic processing that gives rise to a soluble TEK extracellular domain. The soluble extracellular domain modulates signaling by functioning as decoy receptor for angiopoietins. TEK phosphorylates DOK2, GRB7, GRB14, PIK3R1, SHC1 and TIE1. This Bos taurus (Bovine) protein is Angiopoietin-1 receptor (TEK).